The primary structure comprises 254 residues: tRNA threonylcarbamoyladenosine dehydratase (254 aa).

This sequence belongs to the HesA/MoeB/ThiF family.

Functionally, catalyzes the ATP-dependent dehydration of threonylcarbamoyladenosine at position 37 (t(6)A37) to form cyclic t(6)A37 (ct(6)A37) in tRNAs that read codons beginning with adenine. This is tRNA threonylcarbamoyladenosine dehydratase (tcdA) from Bacillus subtilis (strain 168).